A 232-amino-acid polypeptide reads, in one-letter code: Probable intron-encoded endonuclease aI3 (232 aa).

Belongs to the LAGLIDADG endonuclease family.

The protein resides in the mitochondrion. In terms of biological role, mitochondrial DNA endonuclease involved in intron homing. This Dictyostelium discoideum (Social amoeba) protein is Probable intron-encoded endonuclease aI3 (aI3).